The following is a 316-amino-acid chain: Ornithine carbamoyltransferase (316 aa).

Carbamoyl phosphate contacts are provided by residues 57-60 (STRT), Gln-84, Arg-108, and 135-138 (HPCQ). L-ornithine-binding positions include Asn-166, Asp-230, and 234-235 (SM). Residues 269-270 (CL) and Arg-297 contribute to the carbamoyl phosphate site.

Belongs to the aspartate/ornithine carbamoyltransferase superfamily. OTCase family.

It localises to the cytoplasm. It catalyses the reaction carbamoyl phosphate + L-ornithine = L-citrulline + phosphate + H(+). It functions in the pathway amino-acid degradation; L-arginine degradation via ADI pathway; carbamoyl phosphate from L-arginine: step 2/2. Functionally, reversibly catalyzes the transfer of the carbamoyl group from carbamoyl phosphate (CP) to the N(epsilon) atom of ornithine (ORN) to produce L-citrulline. This Bacillus cereus (strain 03BB102) protein is Ornithine carbamoyltransferase.